Consider the following 50-residue polypeptide: MAGLLRFLLSKGRALYNWAKSHVGKVWEWLKSGATYEQIKEWIENALGWR.

An N-formylmethionine modification is found at Met1.

It localises to the secreted. Has bacteriolytic activity against Gram-positive bacteria B.subtilis, L.lactis and M.luteus and several species from genus Staphylococcus including methicillin-resistant S.aureus, with MIC values ranging from 0.11 uM to 7.8 uM. Has no activity against Gram-negative bacteria or fungi. In vitro, has a dose-dependent cytolytic effect on eukaryotic cells. The polypeptide is Bacteriocin BacSp222 (Staphylococcus pseudintermedius).